Consider the following 512-residue polypeptide: Putative B3 domain-containing protein REM4 (512 aa).

Residues 11-103 (NKAFFIIDLS…VFHVSPFGRS (93 aa)) constitute a DNA-binding region (TF-B3 1). The tract at residues 111–145 (SSSTSDDDDDERTVFDDDEDDDVGDDDDNSISEDD) is disordered. Acidic residues predominate over residues 115 to 145 (SDDDDDERTVFDDDEDDDVGDDDDNSISEDD). 2 DNA-binding regions (TF-B3) span residues 169–265 (YLVA…LCPN) and 307–403 (ILTF…CSKV). The tract at residues 408–465 (SSDGHKTADRKPRMTDQAPLAEEQTDNRVEKRAQVTEEGGPSRSTRADPGNLQQKQPC) is disordered. 2 stretches are compositionally biased toward basic and acidic residues: residues 410–421 (DGHKTADRKPRM) and 432–442 (TDNRVEKRAQV).

It localises to the nucleus. The polypeptide is Putative B3 domain-containing protein REM4 (REM4) (Arabidopsis thaliana (Mouse-ear cress)).